Consider the following 223-residue polypeptide: Putative 3-methyladenine DNA glycosylase (223 aa).

Belongs to the DNA glycosylase MPG family.

This Pseudomonas syringae pv. syringae (strain B728a) protein is Putative 3-methyladenine DNA glycosylase.